Here is a 262-residue protein sequence, read N- to C-terminus: Nitrilase (262 aa).

The 236-residue stretch at Val-2–Leu-237 folds into the CN hydrolase domain. Glu-42 acts as the Proton acceptor in catalysis. Lys-113 functions as the Proton donor in the catalytic mechanism. Cys-146 functions as the Nucleophile in the catalytic mechanism. Val-173–Met-174 contacts substrate.

It belongs to the carbon-nitrogen hydrolase superfamily. As to quaternary structure, homodimer.

The catalysed reaction is a nitrile + 2 H2O = a carboxylate + NH4(+). With respect to regulation, enzymatic activity is inhibited in the presence of acetone, methanol and metal ions such as Ag(2+) and Hg(2+). Is also inhibited by various thiol reagents such as DTNB, p-chloromercuribenzoate, p-hydroxymercuribenzoate, iodacetamide and iodacetate. EDTA has no influence on activity. In terms of biological role, nitrilase that hydrolyzes preferentially aliphatic nitriles like malononitrile and fumaronitrile in vitro. These dinitriles are converted to the corresponding monoacid mononitriles, showing the enzyme is regioselective. Cannot hydrolyze compounds with a nitrile group bound to an aromatic ring or amino acid. Its biological role is unknown. The chain is Nitrilase from Pyrococcus abyssi (strain GE5 / Orsay).